A 156-amino-acid polypeptide reads, in one-letter code: Small ribosomal subunit protein uS7 (156 aa).

This sequence belongs to the universal ribosomal protein uS7 family. As to quaternary structure, part of the 30S ribosomal subunit. Contacts proteins S9 and S11.

Functionally, one of the primary rRNA binding proteins, it binds directly to 16S rRNA where it nucleates assembly of the head domain of the 30S subunit. Is located at the subunit interface close to the decoding center, probably blocks exit of the E-site tRNA. The sequence is that of Small ribosomal subunit protein uS7 from Mycolicibacterium smegmatis (strain ATCC 700084 / mc(2)155) (Mycobacterium smegmatis).